Reading from the N-terminus, the 253-residue chain is 5'/3'-nucleotidase SurE (253 aa).

The a divalent metal cation site is built by Asp8, Asp9, Ser39, and Asn92.

Belongs to the SurE nucleotidase family. The cofactor is a divalent metal cation.

The protein resides in the cytoplasm. The enzyme catalyses a ribonucleoside 5'-phosphate + H2O = a ribonucleoside + phosphate. It catalyses the reaction a ribonucleoside 3'-phosphate + H2O = a ribonucleoside + phosphate. The catalysed reaction is [phosphate](n) + H2O = [phosphate](n-1) + phosphate + H(+). Nucleotidase with a broad substrate specificity as it can dephosphorylate various ribo- and deoxyribonucleoside 5'-monophosphates and ribonucleoside 3'-monophosphates with highest affinity to 3'-AMP. Also hydrolyzes polyphosphate (exopolyphosphatase activity) with the preference for short-chain-length substrates (P20-25). Might be involved in the regulation of dNTP and NTP pools, and in the turnover of 3'-mononucleotides produced by numerous intracellular RNases (T1, T2, and F) during the degradation of various RNAs. This Sodalis glossinidius (strain morsitans) protein is 5'/3'-nucleotidase SurE.